A 384-amino-acid chain; its full sequence is Carbamoyl phosphate synthase small chain (384 aa).

Residues 1–192 (MPIAAAKPAL…FGPVAEQQGQ (192 aa)) form a CPSase region. L-glutamine-binding residues include S51, G244, and G246. A Glutamine amidotransferase type-1 domain is found at 196–381 (TVVALDFGVK…VKLMRQQKAE (186 aa)). C272 acts as the Nucleophile in catalysis. 5 residues coordinate L-glutamine: M273, Q276, N312, G314, and F315. Active-site residues include H354 and E356.

This sequence belongs to the CarA family. Composed of two chains; the small (or glutamine) chain promotes the hydrolysis of glutamine to ammonia, which is used by the large (or ammonia) chain to synthesize carbamoyl phosphate. Tetramer of heterodimers (alpha,beta)4.

The enzyme catalyses hydrogencarbonate + L-glutamine + 2 ATP + H2O = carbamoyl phosphate + L-glutamate + 2 ADP + phosphate + 2 H(+). The catalysed reaction is L-glutamine + H2O = L-glutamate + NH4(+). The protein operates within amino-acid biosynthesis; L-arginine biosynthesis; carbamoyl phosphate from bicarbonate: step 1/1. Its pathway is pyrimidine metabolism; UMP biosynthesis via de novo pathway; (S)-dihydroorotate from bicarbonate: step 1/3. In terms of biological role, small subunit of the glutamine-dependent carbamoyl phosphate synthetase (CPSase). CPSase catalyzes the formation of carbamoyl phosphate from the ammonia moiety of glutamine, carbonate, and phosphate donated by ATP, constituting the first step of 2 biosynthetic pathways, one leading to arginine and/or urea and the other to pyrimidine nucleotides. The small subunit (glutamine amidotransferase) binds and cleaves glutamine to supply the large subunit with the substrate ammonia. The chain is Carbamoyl phosphate synthase small chain from Synechocystis sp. (strain ATCC 27184 / PCC 6803 / Kazusa).